The primary structure comprises 55 residues: uncharacterized protein (55 aa).

Residues 1–22 form a disordered region; that stretch reads MPALKSHVRPNSAAPARRQPWP.

This is an uncharacterized protein from Rhodobacter capsulatus (Rhodopseudomonas capsulata).